Consider the following 293-residue polypeptide: Xylanase inhibitor protein XIP (293 aa).

The first 21 residues, 1–21 (MALRRLAALLSLAVLLSAGLA), serve as a signal peptide directing secretion. Positions 31–293 (GDTVIIWGRN…DKKTGFTAHL (263 aa)) constitute a GH18 domain. 2 cysteine pairs are disulfide-bonded: Cys-50–Cys-92 and Cys-189–Cys-218.

This sequence belongs to the glycosyl hydrolase 18 family. Xylanase inhibitor subfamily. In terms of tissue distribution, expressed in mature grain.

Its subcellular location is the secreted. Functionally, fungal xylanase inhibitor. Possesses competitive inhibiting activity against several fungal endo-1,4-beta-D-xylanases belonging to glycoside hydrolase family 10 (GH10) and family 11 (GH11). May function in plant defense against secreted fungal pathogen xylanases. Is similar to class III chitinases, but does not exhibit chitinase activity. The protein is Xylanase inhibitor protein XIP of Oryza sativa subsp. japonica (Rice).